The following is a 629-amino-acid chain: MDGQAEGSSQYRRVHLPPRSEYRFELEPHERLSIRLVQGRTQSGEDPDAEIFGAELVGGSQERWYPFGDEAKAAVSSWRGAEIEVAGSASTEYLAEEPSPVYTAYSNLHLYLERKRIQARQALRADAKLLTTLASSVLDPSYIAPRTTDPNTETESDPSGTAAATVYRPEGQGPRVMILGPESAGKTSLVKLLANYALRSPAVASLGKGEAAKVAESLRTGGDGIIYPNMEDNLSEEAKKQKREEEKRSDITGWWPVVVNLDPSDGAPPLPCCLSALPLSPLPLASLPSASPAYAFGTNTSTTGAIPPGTSTAHGVAPLSLWLGKENLRENERHFRRVVDWLAEGVERRFARDFRSRMSGLIIDTPGVITADARNKYAFIQHCVKAFKVDTIVVLGHEKLNLEMTKLFASPAVTTVETAEIPGSAGQRLPRVNVIKLPKSGGVVELDETYRSRLKALQVKTYFYGGSTSGSANTDGGVPKPVLPGHSDPLGGVPSLSPYSTTIPFDLLEIYKVGQESLAPSSALPIGASRTVTETQLVKLDPTNSAADQTSLLHSVLALIQPPRGGGGAGQPDSSTNPTDDEIIGAPILGFVHVADIDTVRKKITVLSPSAGRLPSKTAIIGSLDWQDV.

E21 and K72 together coordinate ATP. Residues 142 to 166 are disordered; that stretch reads YIAPRTTDPNTETESDPSGTAAATV. Residues 148 to 159 show a composition bias toward polar residues; sequence TDPNTETESDPS. An ATP-binding site is contributed by 183-188; sequence SAGKTS. The tract at residues 562-582 is disordered; sequence PPRGGGGAGQPDSSTNPTDDE.

Belongs to the Clp1 family. Clp1 subfamily. Component of a pre-mRNA cleavage factor complex. Interacts directly with PCF11.

It localises to the nucleus. Its function is as follows. Required for endonucleolytic cleavage during polyadenylation-dependent pre-mRNA 3'-end formation. This is mRNA cleavage and polyadenylation factor CLP1 from Mycosarcoma maydis (Corn smut fungus).